The following is a 511-amino-acid chain: 2,3-bisphosphoglycerate-independent phosphoglycerate mutase (511 aa).

Mn(2+) is bound by residues D12 and S62. S62 serves as the catalytic Phosphoserine intermediate. Substrate is bound by residues H123, 153–154 (RD), R185, R191, 260–263 (RPDR), and K335. Residues D402, H406, D443, H444, and H462 each coordinate Mn(2+).

It belongs to the BPG-independent phosphoglycerate mutase family. As to quaternary structure, monomer. Mn(2+) serves as cofactor.

It catalyses the reaction (2R)-2-phosphoglycerate = (2R)-3-phosphoglycerate. Its pathway is carbohydrate degradation; glycolysis; pyruvate from D-glyceraldehyde 3-phosphate: step 3/5. Functionally, catalyzes the interconversion of 2-phosphoglycerate and 3-phosphoglycerate. The protein is 2,3-bisphosphoglycerate-independent phosphoglycerate mutase of Acetivibrio thermocellus (strain ATCC 27405 / DSM 1237 / JCM 9322 / NBRC 103400 / NCIMB 10682 / NRRL B-4536 / VPI 7372) (Clostridium thermocellum).